We begin with the raw amino-acid sequence, 148 residues long: MRGDNTGVGKEPAVTERPAIKGYLYVLGSILLVTLAQLAMKWGVMQLPAWQASLDIMLAHPVPLLVITAGVGCYALSLLCWLAALHFTPLNIAYPLLSTSYALVYLLAVSIPSFAEPLEPGKAVGVIFILLGAVLVGIKPVGRKRNAH.

At 1–23 (MRGDNTGVGKEPAVTERPAIKGY) the chain is on the cytoplasmic side. The helical transmembrane segment at 24-44 (LYVLGSILLVTLAQLAMKWGV) threads the bilayer. Over 45 to 63 (MQLPAWQASLDIMLAHPVP) the chain is Periplasmic. The chain crosses the membrane as a helical span at residues 64–84 (LLVITAGVGCYALSLLCWLAA). Residues 85–91 (LHFTPLN) are Cytoplasmic-facing. Residues 92–112 (IAYPLLSTSYALVYLLAVSIP) form a helical membrane-spanning segment. The Periplasmic portion of the chain corresponds to 113–117 (SFAEP). Residues 118-138 (LEPGKAVGVIFILLGAVLVGI) form a helical membrane-spanning segment. Residues 139-148 (KPVGRKRNAH) are Cytoplasmic-facing.

Belongs to the ArnF family. As to quaternary structure, heterodimer of ArnE and ArnF.

The protein localises to the cell inner membrane. The protein operates within bacterial outer membrane biogenesis; lipopolysaccharide biosynthesis. In terms of biological role, translocates 4-amino-4-deoxy-L-arabinose-phosphoundecaprenol (alpha-L-Ara4N-phosphoundecaprenol) from the cytoplasmic to the periplasmic side of the inner membrane. The sequence is that of Probable 4-amino-4-deoxy-L-arabinose-phosphoundecaprenol flippase subunit ArnF from Aeromonas salmonicida (strain A449).